We begin with the raw amino-acid sequence, 739 residues long: Copalyl diphosphate synthase 1 (739 aa).

Residue Lys-154 participates in substrate binding. Mg(2+) is bound by residues Asp-287 and Asp-289. A DXDD motif motif is present at residues Asp-287–Asp-290. Lys-373 lines the substrate pocket.

This sequence belongs to the terpene synthase family. Requires Mg(2+) as cofactor.

It catalyses the reaction (2E,6E,10E)-geranylgeranyl diphosphate = (+)-copalyl diphosphate. It functions in the pathway secondary metabolite biosynthesis; terpenoid biosynthesis. Its function is as follows. Monofunctional diterpene synthase converting geranylgeranyl diphosphate to copalyl diphosphate. The polypeptide is Copalyl diphosphate synthase 1 (CPS1) (Selaginella moellendorffii (Spikemoss)).